The following is a 408-amino-acid chain: Argininosuccinate synthase (408 aa).

ATP-binding positions include 8–16 (AYSGGLDTT) and alanine 35. Residues tyrosine 86 and serine 91 each contribute to the L-citrulline site. Glycine 116 is a binding site for ATP. The L-aspartate site is built by threonine 118, asparagine 122, and aspartate 123. Position 122 (asparagine 122) interacts with L-citrulline. Positions 126, 177, 186, 263, and 275 each coordinate L-citrulline.

The protein belongs to the argininosuccinate synthase family. Type 1 subfamily. As to quaternary structure, homotetramer.

It localises to the cytoplasm. It catalyses the reaction L-citrulline + L-aspartate + ATP = 2-(N(omega)-L-arginino)succinate + AMP + diphosphate + H(+). Its pathway is amino-acid biosynthesis; L-arginine biosynthesis; L-arginine from L-ornithine and carbamoyl phosphate: step 2/3. The chain is Argininosuccinate synthase from Lachnospira eligens (strain ATCC 27750 / DSM 3376 / VPI C15-48 / C15-B4) (Eubacterium eligens).